The primary structure comprises 451 residues: Serine--tRNA ligase (451 aa).

258–260 (TSE) serves as a coordination point for L-serine. Position 289–291 (289–291 (RSE)) interacts with ATP. Glutamate 312 contacts L-serine. 376-379 (EISS) contributes to the ATP binding site. Serine 411 is an L-serine binding site.

The protein belongs to the class-II aminoacyl-tRNA synthetase family. Type-1 seryl-tRNA synthetase subfamily. As to quaternary structure, homodimer. The tRNA molecule binds across the dimer.

The protein localises to the cytoplasm. It catalyses the reaction tRNA(Ser) + L-serine + ATP = L-seryl-tRNA(Ser) + AMP + diphosphate + H(+). The enzyme catalyses tRNA(Sec) + L-serine + ATP = L-seryl-tRNA(Sec) + AMP + diphosphate + H(+). It functions in the pathway aminoacyl-tRNA biosynthesis; selenocysteinyl-tRNA(Sec) biosynthesis; L-seryl-tRNA(Sec) from L-serine and tRNA(Sec): step 1/1. Functionally, catalyzes the attachment of serine to tRNA(Ser). Is also able to aminoacylate tRNA(Sec) with serine, to form the misacylated tRNA L-seryl-tRNA(Sec), which will be further converted into selenocysteinyl-tRNA(Sec). The polypeptide is Serine--tRNA ligase (Bordetella bronchiseptica (strain ATCC BAA-588 / NCTC 13252 / RB50) (Alcaligenes bronchisepticus)).